The sequence spans 166 residues: Large ribosomal subunit protein mL49 (166 aa).

The disordered stretch occupies residues 54–77 (PTKIPEPPKHKHYPTPSGWQPPRD).

Belongs to the mitochondrion-specific ribosomal protein mL49 family. In terms of assembly, component of the mitochondrial ribosome large subunit (39S) which comprises a 16S rRNA and about 50 distinct proteins. Interacts with OXA1L.

It is found in the mitochondrion. This chain is Large ribosomal subunit protein mL49 (Mrpl49), found in Mus musculus (Mouse).